The primary structure comprises 210 residues: Uracil phosphoribosyltransferase (210 aa).

5-phospho-alpha-D-ribose 1-diphosphate is bound by residues Arg78, Arg103, and 130 to 138; that span reads DPMLATGGT. Uracil contacts are provided by residues Ile193 and 198–200; that span reads GDA. Asp199 provides a ligand contact to 5-phospho-alpha-D-ribose 1-diphosphate.

Belongs to the UPRTase family. Mg(2+) is required as a cofactor.

It catalyses the reaction UMP + diphosphate = 5-phospho-alpha-D-ribose 1-diphosphate + uracil. It participates in pyrimidine metabolism; UMP biosynthesis via salvage pathway; UMP from uracil: step 1/1. Its activity is regulated as follows. Allosterically activated by GTP. In terms of biological role, catalyzes the conversion of uracil and 5-phospho-alpha-D-ribose 1-diphosphate (PRPP) to UMP and diphosphate. In Xanthomonas euvesicatoria pv. vesicatoria (strain 85-10) (Xanthomonas campestris pv. vesicatoria), this protein is Uracil phosphoribosyltransferase.